A 165-amino-acid chain; its full sequence is Chorismate pyruvate-lyase (165 aa).

4 residues coordinate substrate: methionine 35, arginine 77, leucine 115, and glutamate 156.

This sequence belongs to the UbiC family. Monomer.

Its subcellular location is the cytoplasm. It catalyses the reaction chorismate = 4-hydroxybenzoate + pyruvate. The protein operates within cofactor biosynthesis; ubiquinone biosynthesis. Removes the pyruvyl group from chorismate, with concomitant aromatization of the ring, to provide 4-hydroxybenzoate (4HB) for the ubiquinone pathway. The chain is Chorismate pyruvate-lyase from Escherichia coli O17:K52:H18 (strain UMN026 / ExPEC).